The sequence spans 389 residues: Elongation factor Tu-3 (389 aa).

In terms of domain architecture, tr-type G spans 10–203 (KPHLNIGTMG…AVDTYVPMPE (194 aa)). Residues 19–26 (GHVDHGKT) form a G1 region. 19-26 (GHVDHGKT) provides a ligand contact to GTP. T26 provides a ligand contact to Mg(2+). The tract at residues 60 to 64 (GITIN) is G2. A G3 region spans residues 81-84 (DMPG). GTP-binding positions include 81-85 (DMPGH) and 136-139 (NKAD). Positions 136 to 139 (NKAD) are G4. Positions 173 to 175 (SGL) are G5.

The protein belongs to the TRAFAC class translation factor GTPase superfamily. Classic translation factor GTPase family. EF-Tu/EF-1A subfamily. As to quaternary structure, monomer.

The protein resides in the cytoplasm. The enzyme catalyses GTP + H2O = GDP + phosphate + H(+). GTP hydrolase that promotes the GTP-dependent binding of aminoacyl-tRNA to the A-site of ribosomes during protein biosynthesis. The protein is Elongation factor Tu-3 of Streptomyces ramocissimus.